Reading from the N-terminus, the 425-residue chain is Serine--tRNA ligase 2 (425 aa).

Residue 230-232 (TAE) coordinates L-serine. ATP is bound at residue 261 to 263 (REE). Glu284 is an L-serine binding site. Residue 348 to 351 (EISS) participates in ATP binding. Ser383 serves as a coordination point for L-serine.

This sequence belongs to the class-II aminoacyl-tRNA synthetase family. Type-1 seryl-tRNA synthetase subfamily. As to quaternary structure, homodimer. The tRNA molecule binds across the dimer.

The protein localises to the cytoplasm. It catalyses the reaction tRNA(Ser) + L-serine + ATP = L-seryl-tRNA(Ser) + AMP + diphosphate + H(+). The enzyme catalyses tRNA(Sec) + L-serine + ATP = L-seryl-tRNA(Sec) + AMP + diphosphate + H(+). It participates in aminoacyl-tRNA biosynthesis; selenocysteinyl-tRNA(Sec) biosynthesis; L-seryl-tRNA(Sec) from L-serine and tRNA(Sec): step 1/1. In terms of biological role, catalyzes the attachment of serine to tRNA(Ser). Is also able to aminoacylate tRNA(Sec) with serine, to form the misacylated tRNA L-seryl-tRNA(Sec), which will be further converted into selenocysteinyl-tRNA(Sec). This Lactiplantibacillus plantarum (strain ATCC BAA-793 / NCIMB 8826 / WCFS1) (Lactobacillus plantarum) protein is Serine--tRNA ligase 2.